The primary structure comprises 149 residues: Deoxyuridine 5'-triphosphate nucleotidohydrolase (149 aa).

Residues 68–70, N81, 85–87, and M95 each bind substrate; these read RSG and LID.

This sequence belongs to the dUTPase family. Requires Mg(2+) as cofactor.

It catalyses the reaction dUTP + H2O = dUMP + diphosphate + H(+). Its pathway is pyrimidine metabolism; dUMP biosynthesis; dUMP from dCTP (dUTP route): step 2/2. In terms of biological role, this enzyme is involved in nucleotide metabolism: it produces dUMP, the immediate precursor of thymidine nucleotides and it decreases the intracellular concentration of dUTP so that uracil cannot be incorporated into DNA. In Polynucleobacter asymbioticus (strain DSM 18221 / CIP 109841 / QLW-P1DMWA-1) (Polynucleobacter necessarius subsp. asymbioticus), this protein is Deoxyuridine 5'-triphosphate nucleotidohydrolase.